Here is a 396-residue protein sequence, read N- to C-terminus: Ubiquitin-like modifier-activating enzyme 5 (396 aa).

Residues Gly-76, Asp-97, Lys-120, Asn-143, and Asn-177 each contribute to the ATP site. Positions 219 and 222 each coordinate Zn(2+). Cys-243 (glycyl thioester intermediate) is an active-site residue. Zn(2+) contacts are provided by Cys-296 and Cys-301.

Belongs to the ubiquitin-activating E1 family. UBA5 subfamily.

In terms of biological role, E1-like enzyme which activates UFM1. The chain is Ubiquitin-like modifier-activating enzyme 5 from Drosophila ananassae (Fruit fly).